Here is a 276-residue protein sequence, read N- to C-terminus: Mitochondrial outer membrane protein porin 2 (276 aa).

The residue at position 76 (S76) is a Phosphoserine. A Phosphothreonine modification is found at T236.

The protein belongs to the eukaryotic mitochondrial porin (TC 1.B.8.1) family. In terms of tissue distribution, expressed in root tips, steles, leaves, sepals, petals, stamen and pistils.

The protein resides in the mitochondrion outer membrane. In terms of biological role, forms a channel through the mitochondrial outer membrane that allows diffusion of small hydrophilic molecules. The channel adopts an open conformation at low or zero membrane potential and a closed conformation at potentials above 30-40 mV. The open state has a weak anion selectivity whereas the closed state is cation-selective. Involved in plant growth and development at the vegetative and reproductive stages. Is important for leaf and pollen development and mitochondrial membrane potential steady state. May be involved in ABA-mediated early seedling development and disease resistance. This chain is Mitochondrial outer membrane protein porin 2 (VDAC2), found in Arabidopsis thaliana (Mouse-ear cress).